Reading from the N-terminus, the 227-residue chain is Cytidylate kinase (227 aa).

Position 12-20 (12-20) interacts with ATP; sequence GPGGAGKGT.

This sequence belongs to the cytidylate kinase family. Type 1 subfamily.

It is found in the cytoplasm. The enzyme catalyses CMP + ATP = CDP + ADP. It carries out the reaction dCMP + ATP = dCDP + ADP. This chain is Cytidylate kinase, found in Klebsiella pneumoniae (strain 342).